The primary structure comprises 160 residues: Protein-export protein SecB (160 aa).

The protein belongs to the SecB family. As to quaternary structure, homotetramer, a dimer of dimers. One homotetramer interacts with 1 SecA dimer.

It localises to the cytoplasm. Functionally, one of the proteins required for the normal export of preproteins out of the cell cytoplasm. It is a molecular chaperone that binds to a subset of precursor proteins, maintaining them in a translocation-competent state. It also specifically binds to its receptor SecA. The sequence is that of Protein-export protein SecB from Burkholderia lata (strain ATCC 17760 / DSM 23089 / LMG 22485 / NCIMB 9086 / R18194 / 383).